A 225-amino-acid polypeptide reads, in one-letter code: PKHD-type hydroxylase YbiX (225 aa).

Residues threonine 78 to serine 177 enclose the Fe2OG dioxygenase domain. Histidine 96, aspartate 98, and histidine 158 together coordinate Fe cation. 2-oxoglutarate is bound at residue arginine 168.

Fe(2+) serves as cofactor. The cofactor is L-ascorbate.

This chain is PKHD-type hydroxylase YbiX, found in Escherichia coli O81 (strain ED1a).